Consider the following 325-residue polypeptide: Tetraacyldisaccharide 4'-kinase (325 aa).

55-62 (TAGGNGKT) provides a ligand contact to ATP.

Belongs to the LpxK family.

The enzyme catalyses a lipid A disaccharide + ATP = a lipid IVA + ADP + H(+). It participates in glycolipid biosynthesis; lipid IV(A) biosynthesis; lipid IV(A) from (3R)-3-hydroxytetradecanoyl-[acyl-carrier-protein] and UDP-N-acetyl-alpha-D-glucosamine: step 6/6. Functionally, transfers the gamma-phosphate of ATP to the 4'-position of a tetraacyldisaccharide 1-phosphate intermediate (termed DS-1-P) to form tetraacyldisaccharide 1,4'-bis-phosphate (lipid IVA). This is Tetraacyldisaccharide 4'-kinase from Salmonella paratyphi A (strain ATCC 9150 / SARB42).